The primary structure comprises 202 residues: tRNA (pseudouridine(54)-N(1))-methyltransferase (202 aa).

S-adenosyl-L-methionine contacts are provided by Leu130, Gly152, and Cys185.

This sequence belongs to the methyltransferase superfamily. TrmY family. Homodimer.

Its subcellular location is the cytoplasm. The catalysed reaction is pseudouridine(54) in tRNA + S-adenosyl-L-methionine = N(1)-methylpseudouridine(54) in tRNA + S-adenosyl-L-homocysteine + H(+). Specifically catalyzes the N1-methylation of pseudouridine at position 54 (Psi54) in tRNAs. The polypeptide is tRNA (pseudouridine(54)-N(1))-methyltransferase (Methanococcoides burtonii (strain DSM 6242 / NBRC 107633 / OCM 468 / ACE-M)).